A 361-amino-acid chain; its full sequence is MIAFISDLHLGNIYANKKETEEHSYNALAKIEEKLLEYQPDLVLVGGDIFDKNKVSGKEIGVFIDFINKMNKNNIGVVSISGNHDGKYWLKESFDHAIPYILYKSGINPENGYEYYSFAGIYLKNSRDWKTLSMIEDKYDISIVGFSFYTKDRLPELYEYLSIIDREKSDYILLMHQSLKSLLPQDPAAIDLTIENYKYALFGHMHMKYYKDKIIVTPPPYSISLKEANTEKGFWLIDKKPVFVPIEDSRPFIKMAIDLDNPIEIKPNKNAILILDVYYRESQIDKLNLLKKTLSENFLYVKINPILKETSKIIVKKSENKEEIFKKYLKEDYDFFMELYEKFRDIKDPETIVQYLEFFYR.

Residues aspartate 7, histidine 9, aspartate 48, and asparagine 83 each coordinate Mn(2+). The Proton donor role is filled by histidine 84. Mn(2+)-binding residues include histidine 176, histidine 204, and histidine 206.

This sequence belongs to the MRE11/RAD32 family. As to quaternary structure, homodimer. Forms a heterotetramer composed of two Mre11 subunits and two Rad50 subunits. The cofactor is Mn(2+).

Its activity is regulated as follows. Nuclease activity is regulated by Rad50. Functionally, part of the Rad50/Mre11 complex, which is involved in the early steps of DNA double-strand break (DSB) repair. The complex may facilitate opening of the processed DNA ends to aid in the recruitment of HerA and NurA. Mre11 binds to DSB ends and has both double-stranded 3'-5' exonuclease activity and single-stranded endonuclease activity. The sequence is that of DNA double-strand break repair protein Mre11 from Nanoarchaeum equitans (strain Kin4-M).